The following is a 314-amino-acid chain: Phospho-N-acetylmuramoyl-pentapeptide-transferase (314 aa).

10 helical membrane-spanning segments follow: residues 4 to 24 (LIFY…PIFI), 52 to 72 (TMGG…TYFI), 77 to 97 (LFLI…LDDY), 111 to 131 (IQKL…ISIF), 146 to 166 (LDLK…MSNA), 169 to 189 (LTDG…LFTA), 191 to 211 (IAGI…AYLF), 219 to 239 (IFMG…LALY), 242 to 262 (VELF…SVII), and 294 to 314 (IVLI…GGVL).

This sequence belongs to the glycosyltransferase 4 family. MraY subfamily. Requires Mg(2+) as cofactor.

It localises to the cell inner membrane. It catalyses the reaction UDP-N-acetyl-alpha-D-muramoyl-L-alanyl-gamma-D-glutamyl-meso-2,6-diaminopimeloyl-D-alanyl-D-alanine + di-trans,octa-cis-undecaprenyl phosphate = di-trans,octa-cis-undecaprenyl diphospho-N-acetyl-alpha-D-muramoyl-L-alanyl-D-glutamyl-meso-2,6-diaminopimeloyl-D-alanyl-D-alanine + UMP. The protein operates within cell wall biogenesis; peptidoglycan biosynthesis. Its function is as follows. Catalyzes the initial step of the lipid cycle reactions in the biosynthesis of the cell wall peptidoglycan: transfers peptidoglycan precursor phospho-MurNAc-pentapeptide from UDP-MurNAc-pentapeptide onto the lipid carrier undecaprenyl phosphate, yielding undecaprenyl-pyrophosphoryl-MurNAc-pentapeptide, known as lipid I. This chain is Phospho-N-acetylmuramoyl-pentapeptide-transferase, found in Petrotoga mobilis (strain DSM 10674 / SJ95).